The sequence spans 388 residues: Protein FAM199X (388 aa).

The span at 288–312 shows a compositional bias: low complexity; that stretch reads SMVSSASSSGSSVGNSASNSSANMS. The segment at 288–358 is disordered; it reads SMVSSASSSG…QLKEQRQARK (71 aa). Phosphoserine is present on residues Ser316 and Ser321. The span at 330–349 shows a compositional bias: basic residues; sequence DSKKRSKQRKLQQKAFRKRQ.

This sequence belongs to the FAM199 family.

This is Protein FAM199X (Fam199x) from Mus musculus (Mouse).